Consider the following 176-residue polypeptide: Jacalin-related lectin 19 (176 aa).

One can recognise a Jacalin-type lectin domain in the interval 12-154; it reads TVFVGPWGGN…LDSIGFHLSR (143 aa).

The protein belongs to the jacalin lectin family.

This is Jacalin-related lectin 19 (JAL19) from Arabidopsis thaliana (Mouse-ear cress).